The following is a 611-amino-acid chain: Guanylate-binding protein 6 (611 aa).

Residues 1–308 (MTQPQMAPIC…NAINSGAVPC (308 aa)) are GTPase domain (Globular). Residues 33–275 (SQPVVVVAIV…FVSYIFTYAK (243 aa)) enclose the GB1/RHD3-type G domain. Residues 43–50 (GLYRTGKS), 65–67 (LGS), and 95–99 (DTEGL) contribute to the GTP site.

The protein belongs to the TRAFAC class dynamin-like GTPase superfamily. GB1/RHD3 GTPase family. GB1 subfamily.

The protein localises to the cytoplasmic vesicle. The catalysed reaction is GTP + H2O = GDP + phosphate + H(+). Interferon (IFN)-inducible GTPase that plays important roles in innate immunity against a diverse range of bacterial, viral and protozoan pathogens, such as bacterial pathogens Listeria monocytogenes and Mycobacterium bovis BCG as well as the protozoan pathogen Toxoplasma gondii. Confers protection to several pathogens, including the bacterial pathogens Listeria monocytogenes and Mycobacterium bovis BCG as well as the protozoan pathogen Toxoplasma gondii. In Mus musculus (Mouse), this protein is Guanylate-binding protein 6 (Gbp6).